Reading from the N-terminus, the 293-residue chain is Bifunctional protein FolD (293 aa).

Residues 165 to 167, serine 190, and isoleucine 231 contribute to the NADP(+) site; that span reads GRS.

The protein belongs to the tetrahydrofolate dehydrogenase/cyclohydrolase family. Homodimer.

It catalyses the reaction (6R)-5,10-methylene-5,6,7,8-tetrahydrofolate + NADP(+) = (6R)-5,10-methenyltetrahydrofolate + NADPH. The enzyme catalyses (6R)-5,10-methenyltetrahydrofolate + H2O = (6R)-10-formyltetrahydrofolate + H(+). The protein operates within one-carbon metabolism; tetrahydrofolate interconversion. Catalyzes the oxidation of 5,10-methylenetetrahydrofolate to 5,10-methenyltetrahydrofolate and then the hydrolysis of 5,10-methenyltetrahydrofolate to 10-formyltetrahydrofolate. This chain is Bifunctional protein FolD, found in Synechococcus sp. (strain CC9311).